The primary structure comprises 44 residues: Unknown protein 9 (44 aa).

This chain is Unknown protein 9, found in Pseudotsuga menziesii (Douglas-fir).